The following is a 120-amino-acid chain: Large ribosomal subunit protein uL18 (120 aa).

Belongs to the universal ribosomal protein uL18 family. As to quaternary structure, part of the 50S ribosomal subunit; part of the 5S rRNA/L5/L18/L25 subcomplex. Contacts the 5S and 23S rRNAs.

Functionally, this is one of the proteins that bind and probably mediate the attachment of the 5S RNA into the large ribosomal subunit, where it forms part of the central protuberance. The chain is Large ribosomal subunit protein uL18 from Rhodopseudomonas palustris (strain BisA53).